A 499-amino-acid polypeptide reads, in one-letter code: uncharacterized protein (499 aa).

The next 12 membrane-spanning stretches (helical) occupy residues 51–71 (LLFRLDLVLAPTIMILYLVAF), 98–118 (IIASVFYVTFILFEMPTTLLM), 127–147 (LAFIVISYSLTTIFTGFCHNF), 155–175 (LVLGFCEAGLFPCLALYLTMI), 187–207 (YLFASSALSGAFGGLFAYAVL), 220–240 (WLFIIEGLIGFVCGVAVYFII), 301–321 (CLYGFSTFLPAIISGMGYTSL), 325–345 (YMTIPVYILGAATYIAASFLS), 352–372 (GIILIIGNIFPIVGYILLLAC), 378–398 (VLYFACYLCSVGVYTGAGLNV), 412–432 (ATAISLQLAIANSSGILAGQI), and 444–464 (LTSLIAIFISTVLHVVNIFFL).

Belongs to the major facilitator superfamily. Allantoate permease family.

The protein localises to the golgi apparatus. Its subcellular location is the membrane. This is an uncharacterized protein from Schizosaccharomyces pombe (strain 972 / ATCC 24843) (Fission yeast).